Consider the following 398-residue polypeptide: Ornithine aminotransferase (398 aa).

Lysine 256 bears the N6-(pyridoxal phosphate)lysine mark.

It belongs to the class-III pyridoxal-phosphate-dependent aminotransferase family. OAT subfamily. It depends on pyridoxal 5'-phosphate as a cofactor.

The protein resides in the cytoplasm. The catalysed reaction is a 2-oxocarboxylate + L-ornithine = L-glutamate 5-semialdehyde + an L-alpha-amino acid. The protein operates within amino-acid biosynthesis; L-proline biosynthesis; L-glutamate 5-semialdehyde from L-ornithine: step 1/1. Functionally, catalyzes the interconversion of ornithine to glutamate semialdehyde. In Oceanobacillus iheyensis (strain DSM 14371 / CIP 107618 / JCM 11309 / KCTC 3954 / HTE831), this protein is Ornithine aminotransferase.